A 631-amino-acid chain; its full sequence is PTS system glucosamine-specific EIICBA component (631 aa).

The 380-residue stretch at 3-382 (KKAFQILQQL…WNLKTPGRET (380 aa)) folds into the PTS EIIC type-1 domain. 8 helical membrane passes run 12–32 (LGRALMTPVAVLPAAGLLLRF), 56–76 (LIFAVGVAIGLAGGEGVAGLA), 106–126 (HLIDMGVFGGIIIGLLAAYLY), 149–169 (IITSVSSLVIGVIFSFVWPLI), 196–216 (LLIPFGLHHIFYTPFYFMMGE), 243–263 (FMMGDFPYMIFCLPAVALAII), 298–318 (FLFVAPVLYLINSILAGVIFV), and 350–370 (VVIPVGIVFAFIYYYLFRFAI). One can recognise a PTS EIIB type-1 domain in the interval 397-478 (DQLAFHVLQA…KTIMAGGVPA (82 aa)). The Phosphocysteine intermediate; for EIIB activity role is filled by C419. At C419 the chain carries Phosphocysteine. Residues 515–619 (DQVFSEKMMG…SAITPVIFTN (105 aa)) enclose the PTS EIIA type-1 domain. H567 (tele-phosphohistidine intermediate; for EIIA activity) is an active-site residue. Position 567 is a phosphohistidine (H567).

It localises to the cell membrane. The catalysed reaction is D-glucosamine(out) + N(pros)-phospho-L-histidyl-[protein] = D-glucosamine 6-phosphate(in) + L-histidyl-[protein]. Functionally, the phosphoenolpyruvate-dependent sugar phosphotransferase system (sugar PTS), a major carbohydrate active transport system, catalyzes the phosphorylation of incoming sugar substrates concomitantly with their translocation across the cell membrane. This system is involved in glucosamine transport. In vitro, when expressed in the absence of GamR and NagP, can transport N-acetylglucosamine. In addition, plays an important role in the phosphorylation of EIIA-deficient PTS transporters. The EIIA domain can transfer a phosphoryl group to EIIA-deficient PTS transporters, enabling growth with maltose, N-acetylglucosamine, sucrose or trehalose as the sole carbon source. The chain is PTS system glucosamine-specific EIICBA component from Bacillus subtilis (strain 168).